The chain runs to 375 residues: Queuine tRNA-ribosyltransferase (375 aa).

Catalysis depends on D89, which acts as the Proton acceptor. Substrate-binding positions include 89–93 (DSGGF), D143, Q187, and G214. The interval 245 to 251 (GVGKPED) is RNA binding. The active-site Nucleophile is the D264. The tract at residues 269-273 (TRNAR) is RNA binding; important for wobble base 34 recognition. Residues C302, C304, C307, and H333 each contribute to the Zn(2+) site.

Belongs to the queuine tRNA-ribosyltransferase family. As to quaternary structure, homodimer. Within each dimer, one monomer is responsible for RNA recognition and catalysis, while the other monomer binds to the replacement base PreQ1. Zn(2+) serves as cofactor.

The catalysed reaction is 7-aminomethyl-7-carbaguanine + guanosine(34) in tRNA = 7-aminomethyl-7-carbaguanosine(34) in tRNA + guanine. It functions in the pathway tRNA modification; tRNA-queuosine biosynthesis. In terms of biological role, catalyzes the base-exchange of a guanine (G) residue with the queuine precursor 7-aminomethyl-7-deazaguanine (PreQ1) at position 34 (anticodon wobble position) in tRNAs with GU(N) anticodons (tRNA-Asp, -Asn, -His and -Tyr). Catalysis occurs through a double-displacement mechanism. The nucleophile active site attacks the C1' of nucleotide 34 to detach the guanine base from the RNA, forming a covalent enzyme-RNA intermediate. The proton acceptor active site deprotonates the incoming PreQ1, allowing a nucleophilic attack on the C1' of the ribose to form the product. After dissociation, two additional enzymatic reactions on the tRNA convert PreQ1 to queuine (Q), resulting in the hypermodified nucleoside queuosine (7-(((4,5-cis-dihydroxy-2-cyclopenten-1-yl)amino)methyl)-7-deazaguanosine). The protein is Queuine tRNA-ribosyltransferase of Enterobacter sp. (strain 638).